Here is a 253-residue protein sequence, read N- to C-terminus: Chloride intracellular channel protein 4 (253 aa).

An N-acetylalanine modification is found at Ala-2. A required for insertion into the membrane region spans residues 2-101; the sequence is ALSMPLNGLK…EEFLEEVLCP (100 aa). Ser-4 carries the phosphoserine modification. Lys-24 is modified (N6-acetyllysine). The short motif at 35–38 is the G-site element; that stretch reads CPFS. A helical transmembrane segment spans residues 37–57; it reads FSQRLFMILWLKGVVFSVTTV. Positions 81–244 constitute a GST C-terminal domain; sequence NSEVKTDVNK…PSDKEVEIAY (164 aa). Lys-130 is subject to N6-acetyllysine. Phosphoserine occurs at positions 132, 167, and 236. A Phosphotyrosine modification is found at Tyr-244.

Belongs to the chloride channel CLIC family. Monomer. Interacts with HRH3. In terms of tissue distribution, detected in brain, in cell bodies and dendrites of Purkinje cells in cerebellar neurons (at protein level). Expressed neonatal and adult cardiomyocytes (at protein level). Marked expression was found in hippocampus and cerebellum, and in many other tissues.

The protein resides in the cytoplasm. The protein localises to the cytoskeleton. Its subcellular location is the microtubule organizing center. It localises to the centrosome. It is found in the cytoplasmic vesicle membrane. The protein resides in the nucleus. The protein localises to the cell membrane. Its subcellular location is the mitochondrion. It localises to the cell junction. It is found in the endoplasmic reticulum membrane. The catalysed reaction is chloride(in) = chloride(out). It catalyses the reaction thiocyanate(in) = thiocyanate(out). The enzyme catalyses nitrate(in) = nitrate(out). It carries out the reaction iodide(out) = iodide(in). The catalysed reaction is bromide(in) = bromide(out). It catalyses the reaction fluoride(in) = fluoride(out). The enzyme catalyses choline(out) = choline(in). Channel activity is redox- and pH-regulated. Anion vs cation selectivity is enhanced when fully oxidized. Functionally, in the soluble state, catalyzes glutaredoxin-like thiol disulfide exchange reactions with reduced glutathione as electron donor. Can insert into membranes and form voltage-dependent multi-ion conductive channels. Membrane insertion seems to be redox-regulated and may occur only under oxidizing conditions. Has alternate cellular functions like a potential role in angiogenesis or in maintaining apical-basolateral membrane polarity during mitosis and cytokinesis. Could also promote endothelial cell proliferation and regulate endothelial morphogenesis (tubulogenesis). Promotes cell-surface expression of HRH3. This is Chloride intracellular channel protein 4 (Clic4) from Rattus norvegicus (Rat).